Reading from the N-terminus, the 72-residue chain is Gene 79 protein (72 aa).

This Mycobacterium (Mycobacteriophage L5) protein is Gene 79 protein (79).